The sequence spans 130 residues: Fumarate reductase subunit C (130 aa).

Helical transmembrane passes span 30–50 (EGTS…VFSL), 60–80 (FVSF…LFAA), and 110–130 (IKAL…VALL).

The protein belongs to the FrdC family. Part of an enzyme complex containing four subunits: a flavoprotein (FrdA), an iron-sulfur protein (FrdB), and two hydrophobic anchor proteins (FrdC and FrdD).

The protein localises to the cell inner membrane. Its function is as follows. Two distinct, membrane-bound, FAD-containing enzymes are responsible for the catalysis of fumarate and succinate interconversion; fumarate reductase is used in anaerobic growth, and succinate dehydrogenase is used in aerobic growth. Anchors the catalytic components of the fumarate reductase complex to the cell inner membrane, binds quinones. This chain is Fumarate reductase subunit C, found in Yersinia pestis bv. Antiqua (strain Angola).